Here is a 180-residue protein sequence, read N- to C-terminus: Adenine phosphoribosyltransferase (180 aa).

The protein belongs to the purine/pyrimidine phosphoribosyltransferase family. In terms of assembly, homodimer.

It is found in the cytoplasm. It catalyses the reaction AMP + diphosphate = 5-phospho-alpha-D-ribose 1-diphosphate + adenine. It functions in the pathway purine metabolism; AMP biosynthesis via salvage pathway; AMP from adenine: step 1/1. Catalyzes a salvage reaction resulting in the formation of AMP, that is energically less costly than de novo synthesis. In Rhizobium meliloti (strain 1021) (Ensifer meliloti), this protein is Adenine phosphoribosyltransferase.